The chain runs to 178 residues: Large ribosomal subunit protein uL6 (178 aa).

It belongs to the universal ribosomal protein uL6 family. In terms of assembly, part of the 50S ribosomal subunit.

Functionally, this protein binds to the 23S rRNA, and is important in its secondary structure. It is located near the subunit interface in the base of the L7/L12 stalk, and near the tRNA binding site of the peptidyltransferase center. The polypeptide is Large ribosomal subunit protein uL6 (Helicobacter pylori (strain P12)).